The chain runs to 143 residues: Transcriptional regulator MraZ (143 aa).

SpoVT-AbrB domains follow at residues 5-47 (TYTP…PRAA) and 76-119 (TDEQ…DAQA).

This sequence belongs to the MraZ family. As to quaternary structure, forms oligomers.

It is found in the cytoplasm. The protein resides in the nucleoid. The sequence is that of Transcriptional regulator MraZ from Mycobacterium bovis (strain ATCC BAA-935 / AF2122/97).